Consider the following 26-residue polypeptide: Conotoxin Eb6.17 (26 aa).

Intrachain disulfides connect cysteine 7–cysteine 18 and cysteine 13–cysteine 25.

Belongs to the conotoxin O1 superfamily. In terms of tissue distribution, expressed by the venom duct.

The protein resides in the secreted. This is Conotoxin Eb6.17 (E1) from Conus ebraeus (Hebrew cone).